The following is a 520-amino-acid chain: FNIP repeat-containing protein DDB_G0274063/DDB_G0272642 (520 aa).

2 disordered regions span residues 47 to 86 (QQQS…IDNR) and 100 to 121 (NISS…SSSS). A compositionally biased stretch (low complexity) spans 51–84 (NNNNNNNNNNNNNNNNNNFINFSNHTNNINNNID). FNIP repeat units follow at residues 242 to 285 (YNNN…FGES), 286 to 331 (FNQD…FGLS), 332 to 406 (YNQP…FGVQ), and 453 to 496 (FNQQ…FHNS).

This is FNIP repeat-containing protein DDB_G0274063/DDB_G0272642 from Dictyostelium discoideum (Social amoeba).